The following is a 578-amino-acid chain: Putative fatty-acid--CoA ligase fadD21 (578 aa).

This sequence belongs to the ATP-dependent AMP-binding enzyme family.

The protein is Putative fatty-acid--CoA ligase fadD21 (fadD21) of Mycobacterium bovis (strain ATCC BAA-935 / AF2122/97).